We begin with the raw amino-acid sequence, 257 residues long: MAHSQVGIQLISESTEKTLAELIALCAEHNIIHNEKSPLALVQTDDRLELRKLDEPKLGAVYVDFVGGTMAHRRKFGGGRGEAVAKAVGIKGSALPTVIDATAGLGRDAFVLAAIGCQVRLVERHPVVFLLLQDGLNRAYQDEEIGEMLQQNLHLLNVQHINELDPNSDYADVVYLDPMYPHKQKSALVKKEMRVFQHLVGADLDADELLLPALQLAKKRVVVKRPDYAEFLCGKQPHFSHETKNHRFDIYMGASQC.

S-adenosyl-L-methionine is bound by residues 107–108, 123–124, and Asp-177; these read RD and ER.

The protein belongs to the methyltransferase superfamily. RsmJ family.

Its subcellular location is the cytoplasm. It catalyses the reaction guanosine(1516) in 16S rRNA + S-adenosyl-L-methionine = N(2)-methylguanosine(1516) in 16S rRNA + S-adenosyl-L-homocysteine + H(+). Its function is as follows. Specifically methylates the guanosine in position 1516 of 16S rRNA. In Haemophilus influenzae (strain ATCC 51907 / DSM 11121 / KW20 / Rd), this protein is Ribosomal RNA small subunit methyltransferase J.